Consider the following 749-residue polypeptide: Chaperone protein dnaK3 (749 aa).

Thr198 is subject to Phosphothreonine; by autocatalysis. 3 stretches are compositionally biased toward basic and acidic residues: residues 643–653 (RWDADPWDRSR), 661–694 (YDDRRSPVSDPYRGERWVEEQTSMSRREPVRDRN), and 711–724 (PTWEEDQPPRRDRS). The segment at 643–749 (RWDADPWDRS…GWDDDDDEWF (107 aa)) is disordered. A compositionally biased stretch (acidic residues) spans 740–749 (GWDDDDDEWF).

It belongs to the heat shock protein 70 family.

Acts as a chaperone. The sequence is that of Chaperone protein dnaK3 (dnaK3) from Synechococcus elongatus (strain ATCC 33912 / PCC 7942 / FACHB-805) (Anacystis nidulans R2).